The chain runs to 103 residues: Small ribosomal subunit protein uS10 (103 aa).

Belongs to the universal ribosomal protein uS10 family. Part of the 30S ribosomal subunit.

In terms of biological role, involved in the binding of tRNA to the ribosomes. This Baumannia cicadellinicola subsp. Homalodisca coagulata protein is Small ribosomal subunit protein uS10.